Here is a 539-residue protein sequence, read N- to C-terminus: Phenylalanine--tRNA ligase beta subunit (539 aa).

Positions 271–347 (LSPARWTVTT…KSYGYENLKA (77 aa)) constitute a B5 domain. Mg(2+) is bound by residues aspartate 325, aspartate 331, glutamate 334, and aspartate 335.

Belongs to the phenylalanyl-tRNA synthetase beta subunit family. Type 2 subfamily. Tetramer of two alpha and two beta subunits. It depends on Mg(2+) as a cofactor.

The protein resides in the cytoplasm. The catalysed reaction is tRNA(Phe) + L-phenylalanine + ATP = L-phenylalanyl-tRNA(Phe) + AMP + diphosphate + H(+). This Methanothrix thermoacetophila (strain DSM 6194 / JCM 14653 / NBRC 101360 / PT) (Methanosaeta thermophila) protein is Phenylalanine--tRNA ligase beta subunit.